The chain runs to 225 residues: Membrane-spanning 4-domains subfamily A member 4D (225 aa).

The Cytoplasmic segment spans residues 1 to 42; the sequence is MQGLAQTTMAVVPGGAPPSENSVIKSQMWNKNKEKFLKGEPK. A helical transmembrane segment spans residues 43 to 63; that stretch reads VLGAIQVMIAFINFSLGIIII. Residues 64-73 lie on the Extracellular side of the membrane; it reads LNRVSERFMS. The helical transmembrane segment at 74-94 threads the bilayer; the sequence is VLLLAPFWGSIMFIFSGSLSI. The Cytoplasmic segment spans residues 95 to 113; it reads AAGVKPTKAMIISSLSVNT. A helical transmembrane segment spans residues 114–134; the sequence is ISSVLAVAASIIGVISVISGV. Residues 135-148 are Extracellular-facing; the sequence is FRQFRSQPAIASLD. A helical transmembrane segment spans residues 149–169; sequence VLMTILNMLEFCIAVSVSAFG. Residues 170–225 lie on the Cytoplasmic side of the membrane; sequence CKASCCNSSEVLVVLPSNSAVTVTAPPMILQPLPPSECQGKNVPENLYRNQPGEIV.

Belongs to the MS4A family. In terms of tissue distribution, expressed in thymus, spleen, peripheral lymph node, liver, kidney, heart, colon, lung, and testes.

It localises to the membrane. Its function is as follows. May be involved in signal transduction as a component of a multimeric receptor complex. The polypeptide is Membrane-spanning 4-domains subfamily A member 4D (Ms4a4d) (Mus musculus (Mouse)).